The sequence spans 195 residues: Imidazoleglycerol-phosphate dehydratase (195 aa).

It belongs to the imidazoleglycerol-phosphate dehydratase family.

The protein resides in the cytoplasm. The catalysed reaction is D-erythro-1-(imidazol-4-yl)glycerol 3-phosphate = 3-(imidazol-4-yl)-2-oxopropyl phosphate + H2O. It participates in amino-acid biosynthesis; L-histidine biosynthesis; L-histidine from 5-phospho-alpha-D-ribose 1-diphosphate: step 6/9. This chain is Imidazoleglycerol-phosphate dehydratase, found in Polynucleobacter necessarius subsp. necessarius (strain STIR1).